We begin with the raw amino-acid sequence, 276 residues long: Type II pantothenate kinase (276 aa).

8–15 provides a ligand contact to ATP; it reads DAGGTLTK. The active-site Proton acceptor is the Glu76. ATP contacts are provided by residues Thr105, 127–131, Phe143, and Ser230; that span reads GGTIM.

Belongs to the type II pantothenate kinase family. As to quaternary structure, homodimer.

The protein resides in the cytoplasm. The enzyme catalyses (R)-pantothenate + ATP = (R)-4'-phosphopantothenate + ADP + H(+). It participates in cofactor biosynthesis; coenzyme A biosynthesis; CoA from (R)-pantothenate: step 1/5. Catalyzes the phosphorylation of pantothenate (Pan), the first step in CoA biosynthesis. The protein is Type II pantothenate kinase of Bacillus thuringiensis subsp. konkukian (strain 97-27).